A 418-amino-acid chain; its full sequence is MKFAIESISKNSGRLGQLRIKDGGPELKTPLLLQTTKGGSIPWLSADVFESHVSQKPQVLQFTLSTMDQMTEALTHWNSGGGNGLSGYVGLPGHLNILMVRDPCETTLSGGNDRDIMPLFTRRGKESLSSERYMEMVASFKPDIYQGLCDADTNLDSAKKRIQKSVDRTEKFMHYIYEHRCKVNSTLLAPIVGGYNTFARTQSIKHAREQPAGSYGGYIFEGFHTNGLTATTLDTSKLLPIVEHCVKQLEEDKPRILPGAYTPLTILELIRQGIDVFDSSYAYCASLNFKALTFSFVQDAVEHVPFLDITDEAIKEDFTPPLSECSCLTCQKHTRAYLHHLYKTNELLGPILLMVHNIHHYMAFFEEIRESVAKDALPQLTELVRNQNGKTQVDYSIAANNKVISKATMGKGFAAAAV.

The Zn(2+) site is built by C325, C327, C330, and H356.

This sequence belongs to the queuine tRNA-ribosyltransferase family. QTRT2 subfamily. In terms of assembly, heterodimer of a catalytic subunit and an accessory subunit. Zn(2+) is required as a cofactor.

It localises to the cytoplasm. Functionally, non-catalytic subunit of the queuine tRNA-ribosyltransferase (TGT) that catalyzes the base-exchange of a guanine (G) residue with queuine (Q) at position 34 (anticodon wobble position) in tRNAs with GU(N) anticodons (tRNA-Asp, -Asn, -His and -Tyr), resulting in the hypermodified nucleoside queuosine (7-(((4,5-cis-dihydroxy-2-cyclopenten-1-yl)amino)methyl)-7-deazaguanosine). This is Queuine tRNA-ribosyltransferase accessory subunit 2 from Drosophila erecta (Fruit fly).